We begin with the raw amino-acid sequence, 217 residues long: Magnetosome protein MamA (217 aa).

TPR repeat units lie at residues 12 to 44 (VTLY…NDDI), 46 to 79 (QVYY…DAFD), 80 to 113 (VEVA…APDN), 114 to 147 (IKVA…NPVN), 148 to 181 (FNVR…RPNE), and 182 to 215 (GKVH…DERS). The tract at residues 41–112 (NDDIRQVYYR…LERSIADAPD (72 aa)) is N-terminal domain. The segment at 113–217 (NIKVATVLGL…ANELDERSAV (105 aa)) is C-terminal domain.

Belongs to the magnetosome MamA family. Forms round, 20 nm diameter complexes with a central cavity. Probably binds MamC. Interacts with full-length Mms6.

The protein resides in the magnetosome membrane. Functionally, probably forms a large homooligomer on which other magnetosome subunits assemble. Required for formation of functional magnetosomes from pre-existing vesicles. This Magnetospirillum gryphiswaldense (strain DSM 6361 / JCM 21280 / NBRC 15271 / MSR-1) protein is Magnetosome protein MamA.